We begin with the raw amino-acid sequence, 92 residues long: C-C motif chemokine 3 (92 aa).

The first 19 residues, 1–19, serve as a signal peptide directing secretion; it reads MKVPGAALAVLLCTMSLCS. Intrachain disulfides connect Cys-33–Cys-57 and Cys-34–Cys-73.

This sequence belongs to the intercrine beta (chemokine CC) family. Self-associates. Also heterodimer of MIP-1-alpha(4-69) and MIP-1-beta(3-69). Interacts with CCR1.

The protein localises to the secreted. Functionally, monokine with inflammatory and chemokinetic properties. Binds to CCR1, CCR4 and CCR5. One of the major HIV-suppressive factors produced by CD8+ T-cells. Recombinant MIP-1-alpha induces a dose-dependent inhibition of different strains of HIV-1, HIV-2, and simian immunodeficiency virus (SIV). This chain is C-C motif chemokine 3 (CCL3), found in Canis lupus familiaris (Dog).